The chain runs to 104 residues: Putative protein 22K (104 aa).

Residues 35 to 104 (YKQLEKELGE…KAPAAKAPSK (70 aa)) are disordered. Acidic residues predominate over residues 60–78 (PLSEGELEEISEEEEEEGE). The span at 94 to 104 (SKAPAAKAPSK) shows a compositional bias: low complexity.

The chain is Putative protein 22K from Snake adenovirus serotype 1 (SnAdV-1).